The sequence spans 285 residues: MFPYYPLKVTRNLQLLVWAAVLMALSFIFNIFSINVTSVLKVSFTRIPFALIGWMFGPVWGFTFGAIADTMDWLTRGYTWFWLFAIQKPMFCFLAGLVKGVYQVRQSSTNWKIDFWILQSILIGFFVLTLVLLLMYLTDGNFQAAGNQSFGRGFDVNVHILQGITMAAFISFFVGLEIFLGWKYTKVKKPKEMILNLYILMMALLMTLVVSLLIGTVASIEYLVFLSGKPSKNFVKYGSYFFLMPRVLVQALLMPLYLALFKPLIRIAENNLRNYLRVYNLSWKR.

This is an uncharacterized protein from Mycoplasma pneumoniae (strain ATCC 29342 / M129 / Subtype 1) (Mycoplasmoides pneumoniae).